A 185-amino-acid chain; its full sequence is Ribose 1,5-bisphosphate phosphokinase PhnN (185 aa).

Residue 10–17 (GPSGSGKD) coordinates ATP.

The protein belongs to the ribose 1,5-bisphosphokinase family.

It catalyses the reaction alpha-D-ribose 1,5-bisphosphate + ATP = 5-phospho-alpha-D-ribose 1-diphosphate + ADP. It participates in metabolic intermediate biosynthesis; 5-phospho-alpha-D-ribose 1-diphosphate biosynthesis; 5-phospho-alpha-D-ribose 1-diphosphate from D-ribose 5-phosphate (route II): step 3/3. Functionally, catalyzes the phosphorylation of ribose 1,5-bisphosphate to 5-phospho-D-ribosyl alpha-1-diphosphate (PRPP). Accepts ATP but not GTP as a phosphoryl donor, and uses ribose 1,5-bisphosphate but not ribose, ribose 1-phosphate, or ribose 5-phosphate as a phosphoryl acceptor. This is Ribose 1,5-bisphosphate phosphokinase PhnN (phnN) from Escherichia coli (strain K12).